The sequence spans 60 residues: Large ribosomal subunit protein uL30 (60 aa).

This sequence belongs to the universal ribosomal protein uL30 family. Part of the 50S ribosomal subunit.

This is Large ribosomal subunit protein uL30 from Leuconostoc mesenteroides subsp. mesenteroides (strain ATCC 8293 / DSM 20343 / BCRC 11652 / CCM 1803 / JCM 6124 / NCDO 523 / NBRC 100496 / NCIMB 8023 / NCTC 12954 / NRRL B-1118 / 37Y).